Consider the following 147-residue polypeptide: Globin (147 aa).

Residues Gly1 to Val147 form the Globin domain. Heme b contacts are provided by His66 and His98.

Belongs to the globin family. As to quaternary structure, homodimer.

The protein resides in the cytoplasm. The sequence is that of Globin from Busycotypus canaliculatus (Channeled whelk).